A 112-amino-acid chain; its full sequence is Nucleoid-associated protein lpg2755 (112 aa).

It belongs to the YbaB/EbfC family. In terms of assembly, homodimer.

The protein resides in the cytoplasm. The protein localises to the nucleoid. Functionally, binds to DNA and alters its conformation. May be involved in regulation of gene expression, nucleoid organization and DNA protection. This Legionella pneumophila subsp. pneumophila (strain Philadelphia 1 / ATCC 33152 / DSM 7513) protein is Nucleoid-associated protein lpg2755.